Here is a 314-residue protein sequence, read N- to C-terminus: 3'-5' exoribonuclease YhaM (314 aa).

The OB DNA-binding region spans 22–90; it reads SSTKGIASNG…QLKLRNIRPV (69 aa). The region spanning 163 to 279 is the HD domain; that stretch reads HVVSMLNLAK…LHYIDNLDAK (117 aa).

Belongs to the YhaM family. The cofactor is Mn(2+). It depends on Co(2+) as a cofactor.

Its function is as follows. Shows a 3'-5' exoribonuclease activity as well as single-stranded DNA 3'-5'exonuclease activity. Plays a role in the secondary pathway of 23S rRNA 3' end maturation. The sequence is that of 3'-5' exoribonuclease YhaM from Bacillus subtilis (strain 168).